The primary structure comprises 155 residues: Small ribosomal subunit protein uS7 (155 aa).

Belongs to the universal ribosomal protein uS7 family. Part of the 30S ribosomal subunit. Contacts proteins S9 and S11.

Functionally, one of the primary rRNA binding proteins, it binds directly to 16S rRNA where it nucleates assembly of the head domain of the 30S subunit. Is located at the subunit interface close to the decoding center, probably blocks exit of the E-site tRNA. The polypeptide is Small ribosomal subunit protein uS7 (Thermotoga petrophila (strain ATCC BAA-488 / DSM 13995 / JCM 10881 / RKU-1)).